The chain runs to 610 residues: UvrABC system protein C (610 aa).

A GIY-YIG domain is found at 16 to 94; the sequence is SQPGVYRMYD…IKLYQPRYNV (79 aa). The UVR domain maps to 204-239; it reads DQVLTQLIARMEKASQDLAFEEAARIRDQIQAVRRV.

It belongs to the UvrC family. Interacts with UvrB in an incision complex.

It is found in the cytoplasm. Functionally, the UvrABC repair system catalyzes the recognition and processing of DNA lesions. UvrC both incises the 5' and 3' sides of the lesion. The N-terminal half is responsible for the 3' incision and the C-terminal half is responsible for the 5' incision. The chain is UvrABC system protein C from Salmonella schwarzengrund (strain CVM19633).